The primary structure comprises 226 residues: MKRGKKYRAAVARYDRAERFSLDRAVGLLKEVRYASFDETVEVHVSLRLKKNQTVRDTVVLPHRFRAEVRVLVFCKEDRVSEALAAGAAYAGGAEYLEKVKGGWFDFDVVVASPDMMKDVGRLGMVLGRRGLMPNPRTGTVSADLGAAVCELKKGRVEFRADKTGVVHLAVGKTTMDSAQIVENVDVFLSEMDRKKPVDVKAGFVRSISLSSSMGPGIWVVHKSEE.

Belongs to the universal ribosomal protein uL1 family. In terms of assembly, part of the 50S ribosomal subunit.

In terms of biological role, binds directly to 23S rRNA. The L1 stalk is quite mobile in the ribosome, and is involved in E site tRNA release. Functionally, protein L1 is also a translational repressor protein, it controls the translation of the L11 operon by binding to its mRNA. The sequence is that of Large ribosomal subunit protein uL1 from Treponema pallidum (strain Nichols).